The sequence spans 473 residues: Photosystem II CP43 reaction center protein (473 aa).

A propeptide spanning residues Met-1 to Glu-14 is cleaved from the precursor. The residue at position 15 (Thr-15) is an N-acetylthreonine. Thr-15 carries the post-translational modification Phosphothreonine. A run of 5 helical transmembrane segments spans residues Leu-69 to Ala-93, Leu-134 to Asn-155, Lys-178 to Thr-200, Lys-255 to Ser-275, and Trp-291 to Ala-312. Residue Glu-367 coordinates [CaMn4O5] cluster. Residues Leu-426 to Asn-473 constitute a propeptide that is removed on maturation. Residues Arg-447–Pro-471 traverse the membrane as a helical segment.

The protein belongs to the PsbB/PsbC family. PsbC subfamily. PSII is composed of 1 copy each of membrane proteins PsbA, PsbB, PsbC, PsbD, PsbE, PsbF, PsbH, PsbI, PsbJ, PsbK, PsbL, PsbM, PsbT, PsbX, PsbY, PsbZ, Psb30/Ycf12, at least 3 peripheral proteins of the oxygen-evolving complex and a large number of cofactors. It forms dimeric complexes. It depends on Binds multiple chlorophylls and provides some of the ligands for the Ca-4Mn-5O cluster of the oxygen-evolving complex. It may also provide a ligand for a Cl- that is required for oxygen evolution. PSII binds additional chlorophylls, carotenoids and specific lipids. as a cofactor. In terms of processing, over time a tryptophan in the fifth lumenal loop is converted to 2-hydroxy-2,3-dihydrotryptophan, 2-oxo-2,3-dihydrotryptophan, and kynurenine by oxidizing species from the active site. This oxidation targets the protein for turnover.

The protein resides in the plastid. It is found in the chloroplast thylakoid membrane. One of the components of the core complex of photosystem II (PSII). It binds chlorophyll and helps catalyze the primary light-induced photochemical processes of PSII. PSII is a light-driven water:plastoquinone oxidoreductase, using light energy to abstract electrons from H(2)O, generating O(2) and a proton gradient subsequently used for ATP formation. The chain is Photosystem II CP43 reaction center protein from Spinacia oleracea (Spinach).